A 110-amino-acid polypeptide reads, in one-letter code: Nucleoid-associated protein Sfum_2790 (110 aa).

Belongs to the YbaB/EbfC family. Homodimer.

Its subcellular location is the cytoplasm. The protein resides in the nucleoid. In terms of biological role, binds to DNA and alters its conformation. May be involved in regulation of gene expression, nucleoid organization and DNA protection. This chain is Nucleoid-associated protein Sfum_2790, found in Syntrophobacter fumaroxidans (strain DSM 10017 / MPOB).